The following is a 435-amino-acid chain: NADH-quinone oxidoreductase subunit D (435 aa).

The protein belongs to the complex I 49 kDa subunit family. NDH-1 is composed of 14 different subunits. Subunits NuoB, C, D, E, F, and G constitute the peripheral sector of the complex.

It is found in the cell inner membrane. The enzyme catalyses a quinone + NADH + 5 H(+)(in) = a quinol + NAD(+) + 4 H(+)(out). NDH-1 shuttles electrons from NADH, via FMN and iron-sulfur (Fe-S) centers, to quinones in the respiratory chain. The immediate electron acceptor for the enzyme in this species is believed to be ubiquinone. Couples the redox reaction to proton translocation (for every two electrons transferred, four hydrogen ions are translocated across the cytoplasmic membrane), and thus conserves the redox energy in a proton gradient. The protein is NADH-quinone oxidoreductase subunit D of Xanthomonas euvesicatoria pv. vesicatoria (strain 85-10) (Xanthomonas campestris pv. vesicatoria).